The following is a 404-amino-acid chain: Ethanolamine-phosphate cytidylyltransferase (404 aa).

Residues 173 to 201 (YADSFGKPPHPTPAGDTLSSEVSSQCPGG) form a disordered region. The span at 189–201 (TLSSEVSSQCPGG) shows a compositional bias: polar residues. CTP-binding positions include 239 to 240 (AF), 247 to 250 (HVDF), Lys-277, 325 to 328 (HGKT), and 354 to 358 (SGSDL). Ser-356 bears the Phosphoserine mark. Residues Thr-359 and Thr-360 each carry the phosphothreonine modification.

Belongs to the cytidylyltransferase family.

The enzyme catalyses phosphoethanolamine + CTP + H(+) = CDP-ethanolamine + diphosphate. Its pathway is phospholipid metabolism; phosphatidylethanolamine biosynthesis; phosphatidylethanolamine from ethanolamine: step 2/3. Its function is as follows. Ethanolamine-phosphate cytidylyltransferase that catalyzes the second step in the synthesis of phosphatidylethanolamine (PE) from ethanolamine via the CDP-ethanolamine pathway. Phosphatidylethanolamine is a dominant inner-leaflet phospholipid in cell membranes, where it plays a role in membrane function by structurally stabilizing membrane-anchored proteins, and participates in important cellular processes such as cell division, cell fusion, blood coagulation, and apoptosis. In Mus musculus (Mouse), this protein is Ethanolamine-phosphate cytidylyltransferase (Pcyt2).